The sequence spans 403 residues: Peroxisomal membrane protein PEX13 (403 aa).

Pro residues predominate over residues 1 to 11 (MASQPPPPPKP). Positions 1–69 (MASQPPPPPK…SQQTGSGNLN (69 aa)) are disordered. The Peroxisomal matrix portion of the chain corresponds to 1–134 (MASQPPPPPK…SSRGAFQSIE (134 aa)). Residues 59 to 69 (PSQQTGSGNLN) are compositionally biased toward polar residues. A helical membrane pass occupies residues 135–155 (SIVHAFASVSMMMDATFSAVY). The tract at residues 145–233 (MMMDATFSAV…EDRAANSAKS (89 aa)) is targeting to peroxisomes. Topologically, residues 156–174 (NSFRAVLDVANHFSRLKIH) are cytoplasmic. A helical membrane pass occupies residues 175–192 (FTKVFSAFALVRTIRYLY). The tract at residues 175-196 (FTKVFSAFALVRTIRYLYRRLQ) is interaction with PEX19. The Peroxisomal matrix portion of the chain corresponds to 193-233 (RRLQWMIGLRRGLENEDLWAESEGTVACLGAEDRAANSAKS). A helical transmembrane segment spans residues 234-254 (WPIFLFFAVILGGPYLIWKLL). Residues 255 to 403 (STHSDEVTDS…TGKNGDKQDL (149 aa)) lie on the Cytoplasmic side of the membrane. One can recognise an SH3 domain in the interval 272-336 (DDHVVARAEY…PANYVKILGK (65 aa)). A Phosphoserine modification is found at serine 354.

The protein belongs to the peroxin-13 family. As to quaternary structure, interacts (via SH3 domain) with PEX14 (via SH3-binding motif); forming the PEX13-PEX14 docking complex. Interacts with PEX19.

It is found in the peroxisome membrane. Its function is as follows. Component of the PEX13-PEX14 docking complex, a translocon channel that specifically mediates the import of peroxisomal cargo proteins bound to PEX5 receptor. The PEX13-PEX14 docking complex forms a large import pore which can be opened to a diameter of about 9 nm. Mechanistically, PEX5 receptor along with cargo proteins associates with the PEX14 subunit of the PEX13-PEX14 docking complex in the cytosol, leading to the insertion of the receptor into the organelle membrane with the concomitant translocation of the cargo into the peroxisome matrix. Involved in the import of PTS1- and PTS2-type containing proteins. The chain is Peroxisomal membrane protein PEX13 (PEX13) from Bos taurus (Bovine).